The primary structure comprises 506 residues: DEAD-box ATP-dependent RNA helicase CshA (506 aa).

The short motif at 2 to 30 is the Q motif element; sequence QNFKELGISDNTVQSLESMGFKEPTPIQK. Residues 33–203 form the Helicase ATP-binding domain; the sequence is IPYALQGIDI…QQFMKSPKII (171 aa). 46–53 contributes to the ATP binding site; the sequence is AQTGTGKT. Residues 150-153 carry the DEAD box motif; sequence DEAD. A Helicase C-terminal domain is found at 214 to 375; the sequence is QIEEFYTIVK…LRPPHRKEVL (162 aa). A disordered region spans residues 436-506; sequence EKPLSRKGRN…KGRTFADHQK (71 aa). Over residues 468–480 the composition is skewed to basic residues; sequence KRSKGYSSKKKST.

This sequence belongs to the DEAD box helicase family. CshA subfamily. As to quaternary structure, oligomerizes, may be a member of the RNA degradosome.

It localises to the cytoplasm. It catalyses the reaction ATP + H2O = ADP + phosphate + H(+). Functionally, DEAD-box RNA helicase possibly involved in RNA degradation. Unwinds dsRNA in both 5'- and 3'-directions, has RNA-dependent ATPase activity. In Staphylococcus aureus (strain MW2), this protein is DEAD-box ATP-dependent RNA helicase CshA.